The primary structure comprises 1565 residues: Synemin (1565 aa).

A head region spans residues 1-10; that stretch reads MLSWRLQTGP. Positions 11–49 are coil 1A; sequence EKAELQELNARLYDYVCRVRELERENLLLEEELRGRRGR. An interaction with DMD and UTRN region spans residues 11–320; sequence EKAELQELNA…YRALLEGESN (310 aa). An IF rod domain is found at 11 to 322; the sequence is EKAELQELNA…ALLEGESNPE (312 aa). Residues 50 to 58 form a linker 1 region; that stretch reads EGLWAEGQA. Residues 59 to 163 form a coil 1B region; sequence RCAEEARSLR…ELRARAASLT (105 aa). Residues 164–186 are linker 12; sequence MHFRARATGPAAPPPRLREVHDS. The coil 2 stretch occupies residues 187–300; that stretch reads YALLVAESWR…LRDYQDLLQV (114 aa). The segment at 301–1565 is tail; that stretch reads KTGLSLEVAT…EEEENDGHWF (1265 aa). The segment at 401-421 is disordered; the sequence is SGYSSSATTQQENSYGKAVSS. Residues 402–421 are compositionally biased toward polar residues; sequence GYSSSATTQQENSYGKAVSS. A Phosphoserine modification is found at Ser429. Positions 472-609 are disordered; that stretch reads YRDRRDKVAA…VKDAGGGTGR (138 aa). Positions 498–577 are enriched in basic and acidic residues; the sequence is KKTEVKATRE…KEKSVREREV (80 aa). Residues Thr598 and Thr651 each carry the phosphothreonine modification. Ser653 and Ser777 each carry phosphoserine. Residues 1019-1040 show a composition bias toward basic and acidic residues; that stretch reads LSKDEASEMEKAVESVVRESLS. The segment at 1019–1060 is disordered; the sequence is LSKDEASEMEKAVESVVRESLSRQRSPAPGSPDEEGGAEAPA. Ser1044, Ser1049, Ser1077, Ser1087, Ser1181, and Ser1184 each carry phosphoserine. Positions 1080-1105 are disordered; that stretch reads SEVAGGASHSSGQRTPQGPVSATVEV. Residues 1087 to 1105 are compositionally biased toward polar residues; that stretch reads SHSSGQRTPQGPVSATVEV. The tract at residues 1152 to 1463 is interaction with TLN1 and VCL; that stretch reads VSAGGDLSQA…GPKETSFTFQ (312 aa). Disordered stretches follow at residues 1198-1221 and 1332-1415; these read EAWGSPEPGPAESSADMDGSGRHS and QLGE…ETSE. The segment at 1244-1563 is interaction with DMD and UTRN; that stretch reads GKVGDYFATE…DNEEEENDGH (320 aa). The segment covering 1354–1379 has biased composition (polar residues); sequence ATHSHTSGRQTVMTEKSTFQSVVSES. Ser1435 carries the post-translational modification Phosphoserine. Arg1487 bears the Omega-N-methylarginine mark. The tract at residues 1505–1525 is disordered; sequence FKASAGEGDQAHREQGKEQAM. Over residues 1513 to 1525 the composition is skewed to basic and acidic residues; that stretch reads DQAHREQGKEQAM.

Belongs to the intermediate filament family. As to quaternary structure, interacts with GFAP and VIM. Isoform 1 interacts with TLN1 and VCL. Isoform 2 interacts with DES and DTNA. Isoform 1 and isoform 2 interact with DMD and UTRN. As to expression, isoform 2 is strongly detected in adult heart, fetal skeletal muscles and fetal heart. Isoform 1 is weakly detected in fetal heart and also in fetal skeletal muscle. Isoform 1 and isoform 2 are detected in adult bladder (at protein level). The mRNA is predominantly expressed in heart and muscle with some expression in brain which may be due to tissue-specific isoforms.

The protein localises to the cytoplasm. The protein resides in the cytoskeleton. Its subcellular location is the cell junction. It is found in the adherens junction. In terms of biological role, type-VI intermediate filament (IF) which plays an important cytoskeletal role within the muscle cell cytoskeleton. It forms heteromeric IFs with desmin and/or vimentin, and via its interaction with cytoskeletal proteins alpha-dystrobrevin, dystrophin, talin-1, utrophin and vinculin, is able to link these heteromeric IFs to adherens-type junctions, such as to the costameres, neuromuscular junctions, and myotendinous junctions within striated muscle cells. The sequence is that of Synemin from Homo sapiens (Human).